Reading from the N-terminus, the 89-residue chain is Large ribosomal subunit protein bL27 (89 aa).

It belongs to the bacterial ribosomal protein bL27 family.

In Synechococcus sp. (strain JA-3-3Ab) (Cyanobacteria bacterium Yellowstone A-Prime), this protein is Large ribosomal subunit protein bL27.